A 732-amino-acid chain; its full sequence is Acylamino-acid-releasing enzyme (732 aa).

An N-acetylmethionine modification is found at methionine 1. Phosphoserine is present on residues serine 185 and serine 187. Catalysis depends on charge relay system residues serine 587, aspartate 675, and histidine 707.

Homotetramer. Expressed in erythrocytes (at protein level).

The protein localises to the cytoplasm. The catalysed reaction is Cleavage of an N-acetyl or N-formyl amino acid from the N-terminus of a polypeptide.. Homotetramerization is required for activity. Tetramerization results in the formation of a gated channel which is involved in substrate selection and substrate access to the catalytic sites. Functionally, this enzyme catalyzes the hydrolysis of the N-terminal peptide bond of an N-acetylated peptide to generate an N-acetylated amino acid and a peptide with a free N-terminus. It preferentially cleaves off Ac-Ala, Ac-Met and Ac-Ser. Also, involved in the degradation of oxidized and glycated proteins. The polypeptide is Acylamino-acid-releasing enzyme (APEH) (Homo sapiens (Human)).